We begin with the raw amino-acid sequence, 570 residues long: Endo-1,4-beta-xylanase 4 (570 aa).

A signal peptide spans 1–24 (MKRFNYGFFHLVLFLISLLLLGSG). N-linked (GlcNAc...) asparagine glycosylation is found at Asn92, Asn190, and Asn300. Residues 195 to 494 (EGSVISIEQI…TQAGDLIDKL (300 aa)) form the GH10 domain. The Proton donor role is filled by Glu325. An N-linked (GlcNAc...) asparagine glycan is attached at Asn339. The active-site Nucleophile is Glu432. Asn545 is a glycosylation site (N-linked (GlcNAc...) asparagine).

This sequence belongs to the glycosyl hydrolase 10 (cellulase F) family.

The enzyme catalyses Endohydrolysis of (1-&gt;4)-beta-D-xylosidic linkages in xylans.. The protein operates within glycan degradation; xylan degradation. Functionally, binds to and hydrolyzes insoluble and soluble xylan substrates. This chain is Endo-1,4-beta-xylanase 4, found in Arabidopsis thaliana (Mouse-ear cress).